A 97-amino-acid chain; its full sequence is Co-chaperonin GroES (97 aa).

The protein belongs to the GroES chaperonin family. Heptamer of 7 subunits arranged in a ring. Interacts with the chaperonin GroEL.

It localises to the cytoplasm. In terms of biological role, together with the chaperonin GroEL, plays an essential role in assisting protein folding. The GroEL-GroES system forms a nano-cage that allows encapsulation of the non-native substrate proteins and provides a physical environment optimized to promote and accelerate protein folding. GroES binds to the apical surface of the GroEL ring, thereby capping the opening of the GroEL channel. The polypeptide is Co-chaperonin GroES (Aeromonas hydrophila subsp. hydrophila (strain ATCC 7966 / DSM 30187 / BCRC 13018 / CCUG 14551 / JCM 1027 / KCTC 2358 / NCIMB 9240 / NCTC 8049)).